Reading from the N-terminus, the 555-residue chain is Formate--tetrahydrofolate ligase (555 aa).

Position 65 to 72 (65 to 72 (TPAGEGKS)) interacts with ATP.

This sequence belongs to the formate--tetrahydrofolate ligase family.

It carries out the reaction (6S)-5,6,7,8-tetrahydrofolate + formate + ATP = (6R)-10-formyltetrahydrofolate + ADP + phosphate. It functions in the pathway one-carbon metabolism; tetrahydrofolate interconversion. The polypeptide is Formate--tetrahydrofolate ligase (Staphylococcus epidermidis (strain ATCC 35984 / DSM 28319 / BCRC 17069 / CCUG 31568 / BM 3577 / RP62A)).